We begin with the raw amino-acid sequence, 368 residues long: L-lactate oxidase (368 aa).

One can recognise an FMN hydroxy acid dehydrogenase domain in the interval 13–368 (VNAIDVLDLA…KQMKVKTTFA (356 aa)). Position 39 (Y39) interacts with pyruvate. FMN is bound by residues 92–94 (PIA), S121, and Q143. Y145 serves as a coordination point for pyruvate. FMN is bound at residue T171. R180 lines the pyruvate pocket. Positions 239 and 261 each coordinate FMN. Residues H263 and R266 each contribute to the pyruvate site. H263 functions as the Proton acceptor in the catalytic mechanism. FMN is bound by residues 294-298 (DGGVQ) and R318.

This sequence belongs to the FMN-dependent alpha-hydroxy acid dehydrogenase family. As to quaternary structure, homotetramer. It depends on FMN as a cofactor.

It catalyses the reaction (S)-lactate + O2 = pyruvate + H2O2. The catalysed reaction is 2-hydroxyoctanoate + O2 = 2-oxooctanoate + H2O2. Its function is as follows. Catalyzes the oxidation of (S)-lactate (L-lactate) to pyruvate, with a reduction of O2 to H2O2. To a lesser extent is also able to use 2-hydroxyoctanoate as substrate. May be involved in the utilization of L-lactate as an energy source for growth. This is L-lactate oxidase from Lacticaseibacillus rhamnosus (strain LMS2-1).